A 274-amino-acid polypeptide reads, in one-letter code: 4-hydroxy-tetrahydrodipicolinate reductase (274 aa).

12-17 contacts NAD(+); the sequence is GAAGRM. Residue arginine 39 coordinates NADP(+). Residues 102–104 and 126–129 each bind NAD(+); these read GTT and SGNM. Histidine 160 acts as the Proton donor/acceptor in catalysis. Histidine 161 lines the (S)-2,3,4,5-tetrahydrodipicolinate pocket. The Proton donor role is filled by lysine 164. Position 170 to 171 (170 to 171) interacts with (S)-2,3,4,5-tetrahydrodipicolinate; that stretch reads GT.

This sequence belongs to the DapB family.

Its subcellular location is the cytoplasm. It carries out the reaction (S)-2,3,4,5-tetrahydrodipicolinate + NAD(+) + H2O = (2S,4S)-4-hydroxy-2,3,4,5-tetrahydrodipicolinate + NADH + H(+). The catalysed reaction is (S)-2,3,4,5-tetrahydrodipicolinate + NADP(+) + H2O = (2S,4S)-4-hydroxy-2,3,4,5-tetrahydrodipicolinate + NADPH + H(+). It functions in the pathway amino-acid biosynthesis; L-lysine biosynthesis via DAP pathway; (S)-tetrahydrodipicolinate from L-aspartate: step 4/4. Catalyzes the conversion of 4-hydroxy-tetrahydrodipicolinate (HTPA) to tetrahydrodipicolinate. This chain is 4-hydroxy-tetrahydrodipicolinate reductase, found in Rhizobium rhizogenes (strain K84 / ATCC BAA-868) (Agrobacterium radiobacter).